Here is a 124-residue protein sequence, read N- to C-terminus: Apolipoprotein C-IV (124 aa).

Positions 1–27 (MLLPRRGLRTLPSLCLYILVLVWVVAC) are cleaved as a signal peptide.

It belongs to the apolipoprotein C4 family. Post-translationally, glycosylated; contains sialic acid. Present in up to five sialylated isoforms. In terms of tissue distribution, blood plasma, associated primarily with VLDL and HDL. Expressed mainly in the liver.

Its subcellular location is the secreted. Its function is as follows. May participate in lipoprotein metabolism. In Oryctolagus cuniculus (Rabbit), this protein is Apolipoprotein C-IV (APOC4).